Reading from the N-terminus, the 480-residue chain is tRNA modification GTPase MnmE (480 aa).

(6S)-5-formyl-5,6,7,8-tetrahydrofolate contacts are provided by arginine 20, glutamate 114, and lysine 154. The TrmE-type G domain occupies 250-406 (GLKLAIIGPP…ILKNIENIAE (157 aa)). Position 260 (asparagine 260) interacts with K(+). Residues 260 to 265 (NVGKSS), 279 to 285 (SNIAGTT), and 304 to 307 (DTAG) each bind GTP. Serine 264 serves as a coordination point for Mg(2+). Residues serine 279, isoleucine 281, and threonine 284 each contribute to the K(+) site. Position 285 (threonine 285) interacts with Mg(2+). Lysine 480 contacts (6S)-5-formyl-5,6,7,8-tetrahydrofolate.

Belongs to the TRAFAC class TrmE-Era-EngA-EngB-Septin-like GTPase superfamily. TrmE GTPase family. In terms of assembly, homodimer. Heterotetramer of two MnmE and two MnmG subunits. The cofactor is K(+).

It is found in the cytoplasm. Exhibits a very high intrinsic GTPase hydrolysis rate. Involved in the addition of a carboxymethylaminomethyl (cmnm) group at the wobble position (U34) of certain tRNAs, forming tRNA-cmnm(5)s(2)U34. The protein is tRNA modification GTPase MnmE of Rickettsia felis (strain ATCC VR-1525 / URRWXCal2) (Rickettsia azadi).